Consider the following 2210-residue polypeptide: Orsellinic acid synthase ArmB (2210 aa).

The segment at 38-261 (LLLDACHYAF…HKTTVDALYH (224 aa)) is N-terminal acylcarrier protein transacylase domain (SAT). The 427-residue stretch at 391–817 (QEPIAICGMS…GSNGALLLEE (427 aa)) folds into the Ketosynthase family 3 (KS3) domain. Residues C561, H696, and H736 each act as for beta-ketoacyl synthase activity in the active site. The tract at residues 915-1240 (VFVFSGQGGQ…GLTLSSSLSQ (326 aa)) is malonyl-CoA:ACP transacylase (MAT) domain. The active-site For acyl/malonyl transferase activity is the S1009. Residues 1307–1437 (MLQSWAQFPS…GQFRPLLVVD (131 aa)) form an N-terminal hotdog fold region. The PKS/mFAS DH domain occupies 1307–1614 (MLQSWAQFPS…FKKLRLNTLQ (308 aa)). The product template (PT) domain stretch occupies residues 1336-1611 (ITGHIVGDVP…GMCFKKLRLN (276 aa)). H1339 (proton acceptor; for dehydratase activity) is an active-site residue. The C-terminal hotdog fold stretch occupies residues 1464-1614 (AEVFTTRTAY…FKKLRLNTLQ (151 aa)). The active-site Proton donor; for dehydratase activity is the D1525. The Carrier 1 domain maps to 1660 to 1735 (VDVQNTVLNI…ELVREISSTV (76 aa)). S1694 carries the post-translational modification O-(pantetheine 4'-phosphoryl)serine. The interval 1739–1761 (AATAVNTPETASTPEPTLQGDAS) is disordered. The region spanning 1845–1922 (SSPSSDLVDT…AVNQYISSKR (78 aa)) is the Carrier 2 domain. Position 1882 is an O-(pantetheine 4'-phosphoryl)serine (S1882). A disordered region spans residues 1920–1946 (SKRPGKSPKQVEETAMDPDREEDLSDL). The span at 1933 to 1944 (TAMDPDREEDLS) shows a compositional bias: acidic residues. Residues 1963–2202 (VPMSVQKSSS…LGAVTQALVD (240 aa)) form a thioesterase (TE) domain region.

It functions in the pathway secondary metabolite biosynthesis. In terms of biological role, non-reducing polyketide synthase, part of the gene cluster that mediates the biosynthesis of melleolides, a range of antifungal and phytotoxic polyketide derivatives composed of an orsellinic acid (OA) moiety esterified to various sesquiterpene alcohols. The first step in melleolides biosynthesis is performed by the delta(6)-protoilludene synthase PRO1 which catalyzes the cyclization of farnesyl diphosphate to protoilludene. The orsellinic acid synthase armB produces OA by condensing acetyl-CoA with 3 malonyl-CoA units in a three-round chain elongation reaction folowed by a C2-C7 ring closure. ArmB further catalyzes the trans-esterification of OA to the various sesquiterpene alcohols resulting from the hydroxylation of protoilludene. The melleolides cluster also includes 5 cytochrome P450 monooxygenases, 4 NAD(+)-dependent oxidoreductases, one flavin-dependent oxidoreductase, and one O-methyltransferase. The cytochrome P450 monooxygenases may be involved in protoilludene hydroxylation to elaborate melleolides with multiple alcohol groups, such as melleolide D, which carries alcohol functionalities at C-4, C-5, C-10, and C-13. The role of the NAD(+)-dependent enzymes remains unknown. Numerous melleolides, including arnamial, show 5'-O-methylation of the aromatic moiety which may be catalyzed by the methyltransferase encoded in the cluster. The flavin-dependent oxidoreductase might represent the dehydrogenase yielding the aldehyde in position 1 of arnamial and other melleolides. Finally, several halogenase localized outside of the cluster (armH1 to armH5), are able to catalyze the transfer of a single chlorine atom to the melleolide backbone, resulting in a 6'-chloromelleolide product. The sequence is that of Orsellinic acid synthase ArmB from Armillaria ostoyae (Armillaria root rot fungus).